The chain runs to 357 residues: Phosphoribosylformylglycinamidine cyclo-ligase (357 aa).

Belongs to the AIR synthase family.

It is found in the cytoplasm. It carries out the reaction 2-formamido-N(1)-(5-O-phospho-beta-D-ribosyl)acetamidine + ATP = 5-amino-1-(5-phospho-beta-D-ribosyl)imidazole + ADP + phosphate + H(+). It functions in the pathway purine metabolism; IMP biosynthesis via de novo pathway; 5-amino-1-(5-phospho-D-ribosyl)imidazole from N(2)-formyl-N(1)-(5-phospho-D-ribosyl)glycinamide: step 2/2. The protein is Phosphoribosylformylglycinamidine cyclo-ligase of Rhodopseudomonas palustris (strain BisB18).